Reading from the N-terminus, the 490-residue chain is NAD/NADP-dependent betaine aldehyde dehydrogenase (490 aa).

Thr-26, Ile-27, and Asp-93 together coordinate K(+). Residue 150 to 153 (GAWN) participates in NADPH binding. The Charge relay system role is filled by Lys-162. 176-179 (KPSE) serves as a coordination point for NADPH. Val-180 lines the K(+) pocket. Residues Gly-209 and 230 to 233 (GTST) each bind NADPH. Leu-246 lines the K(+) pocket. Catalysis depends on Glu-252, which acts as the Proton acceptor. NADPH contacts are provided by Cys-286 and Glu-387. Cys-286 acts as the Nucleophile in catalysis. Cys-286 carries the cysteine sulfenic acid (-SOH) modification. 2 residues coordinate K(+): Lys-457 and Gly-460. Glu-464 serves as the catalytic Charge relay system.

It belongs to the aldehyde dehydrogenase family. Dimer of dimers. Requires K(+) as cofactor.

The catalysed reaction is betaine aldehyde + NAD(+) + H2O = glycine betaine + NADH + 2 H(+). It carries out the reaction betaine aldehyde + NADP(+) + H2O = glycine betaine + NADPH + 2 H(+). The protein operates within amine and polyamine biosynthesis; betaine biosynthesis via choline pathway; betaine from betaine aldehyde: step 1/1. Involved in the biosynthesis of the osmoprotectant glycine betaine. Catalyzes the irreversible oxidation of betaine aldehyde to the corresponding acid. In P.aeruginosa this reaction is a compulsory step in the assimilation of carbon and nitrogen when bacteria are growing in choline or choline precursors. Can use NADP(+) with similar efficiency to NAD(+), a property that can be used by the bacterium to produce the NADPH needed to combat the oxidative stress imposed by the host defenses. The polypeptide is NAD/NADP-dependent betaine aldehyde dehydrogenase (Pseudomonas aeruginosa (strain ATCC 15692 / DSM 22644 / CIP 104116 / JCM 14847 / LMG 12228 / 1C / PRS 101 / PAO1)).